A 591-amino-acid chain; its full sequence is Myelin expression factor 2 (591 aa).

Positions methionine 1–arginine 92 are disordered. Over residues glutamate 22–proline 36 the composition is skewed to basic and acidic residues. Lysine 44 is covalently cross-linked (Glycyl lysine isopeptide (Lys-Gly) (interchain with G-Cter in SUMO2)). Basic and acidic residues-rich tracts occupy residues methionine 45–threonine 63 and tyrosine 74–glycine 87. 2 consecutive RRM domains span residues asparagine 91–aspartate 169 and serine 224–lysine 301. Residues arginine 397 and arginine 417 each carry the omega-N-methylarginine modification. A Phosphoserine modification is found at serine 422. Residues asparagine 514 to asparagine 590 enclose the RRM 3 domain.

Monomer. As to expression, highly expressed in the brain.

It is found in the nucleus. Functionally, transcriptional repressor of the myelin basic protein gene (MBP). Binds to the proximal MB1 element 5'-TTGTCC-3' of the MBP promoter. Its binding to MB1 and function are inhibited by PURA. The chain is Myelin expression factor 2 (Myef2) from Mus musculus (Mouse).